We begin with the raw amino-acid sequence, 847 residues long: MNKTTEYIDAMPIAASEKAALPKTDIRAVHQALDAEHRTWAREDDSPQGSVKARLEQAWPDSLADGQLIKDDEGRDQLKAMPEAKRSSMFPDPWRTNPVGRFWDRLRGRDVTPRYLARLTKEEQESEQKWRTVGTIRRYILLILTLAQTVVATWYMKTILPYQGWALINPMDMVGQDLWVSFMQLLPYMLQTGILILFAVLFCWVSAGFWTALMGFLQLLIGRDKYSISASTVGDEPLNPEHRTALIMPICNEDVNRVFAGLRATWESVKATGNAKHFDVYILSDSYNPDICVAEQKAWMELIAEVGGEGQIFYRRRRRRVKRKSGNIDDFCRRWGSQYSYMVVLDADSVMTGDCLCGLVRLMEANPNAGIIQSSPKASGMDTLYARCQQFATRVYGPLFTAGLHFWQLGESHYWGHNAIIRVKPFIEHCALAPLPGEGSFAGSILSHDFVEAALMRRAGWGVWIAYDLPGSYEELPPNLLDELKRDRRWCHGNLMNFRLFLVKGMHPVHRAVFLTGVMSYLSAPLWFMFLALSTALQVVHALTEPQYFLQPRQLFPVWPQWRPELAIALFASTMVLLFLPKLLSILLIWCKGTKEYGGFWRVTLSLLLEVLFSVLLAPVRMLFHTVFVVSAFLGWEVVWNSPQRDDDSTSWGEAFKRHGSQLLLGLVWAVGMAWLDLRFLFWLAPIVFSLILSPFVSVISSRATVGLRTKRWKLFLIPEEYSPPQVLVDTDRFLEMNRQRSLDDGFMHAVFNPSFNALATAMATARHRASKVLEIARDRHVEQALNETPEKLNRDRRLVLLSDPVTMARLHFRVWNSPERYSSWVSYYEGIKLNPLALRKPDAASQ.

The Cytoplasmic portion of the chain corresponds to 1–139; that stretch reads MNKTTEYIDA…WRTVGTIRRY (139 aa). Residues 140–160 traverse the membrane as a helical segment; the sequence is ILLILTLAQTVVATWYMKTIL. The Periplasmic segment spans residues 161–193; the sequence is PYQGWALINPMDMVGQDLWVSFMQLLPYMLQTG. A helical membrane pass occupies residues 194–214; the sequence is ILILFAVLFCWVSAGFWTALM. Residues 215–512 are Cytoplasmic-facing; the sequence is GFLQLLIGRD…VKGMHPVHRA (298 aa). Residues 513–533 form a helical membrane-spanning segment; that stretch reads VFLTGVMSYLSAPLWFMFLAL. Topologically, residues 534–569 are periplasmic; the sequence is STALQVVHALTEPQYFLQPRQLFPVWPQWRPELAIA. A helical transmembrane segment spans residues 570–590; that stretch reads LFASTMVLLFLPKLLSILLIW. At 591 to 602 the chain is on the cytoplasmic side; the sequence is CKGTKEYGGFWR. Residues 603 to 625 form a helical membrane-spanning segment; it reads VTLSLLLEVLFSVLLAPVRMLFH. At 626–679 the chain is on the periplasmic side; sequence TVFVVSAFLGWEVVWNSPQRDDDSTSWGEAFKRHGSQLLLGLVWAVGMAWLDLR. Residues 680–700 form a helical membrane-spanning segment; it reads FLFWLAPIVFSLILSPFVSVI. Residues 701–847 are Cytoplasmic-facing; the sequence is SSRATVGLRT…ALRKPDAASQ (147 aa).

Belongs to the glycosyltransferase 2 family. OpgH subfamily.

It localises to the cell inner membrane. Its pathway is glycan metabolism; osmoregulated periplasmic glucan (OPG) biosynthesis. Functionally, involved in the biosynthesis of osmoregulated periplasmic glucans (OPGs). In Shigella flexneri, this protein is Glucans biosynthesis glucosyltransferase H (mdoH).